Consider the following 274-residue polypeptide: MKMTIDNISEKKGVPEGIWTKCKKCDYILLQKDFEENLMVCPKCGYCTRLSARKRIEFTVDKGSFKEMDEAIQPVNFLCFPGYSDKIKKSEMSDAVVTGEAKINGYSVVIAVMDFEFMGGSMGSVVGEKIVRAIEKALKKKRHVIIISASGGARMQEGTISLMQMGKTSAALAKLADNRLAFISILTDPTTGGVAASYAMLGDINIAEPKALIGFAGPRVIEQTIRQQLSEEFQRSEFLEKHGMVDIVVERKNIRDVLTKALTFFYNRQCFLKF.

In terms of domain architecture, CoA carboxyltransferase N-terminal spans I18 to F274. 4 residues coordinate Zn(2+): C22, C25, C41, and C44. The C4-type zinc-finger motif lies at C22 to C44.

Belongs to the AccD/PCCB family. As to quaternary structure, acetyl-CoA carboxylase is a heterohexamer composed of biotin carboxyl carrier protein (AccB), biotin carboxylase (AccC) and two subunits each of ACCase subunit alpha (AccA) and ACCase subunit beta (AccD). Requires Zn(2+) as cofactor.

It localises to the cytoplasm. The catalysed reaction is N(6)-carboxybiotinyl-L-lysyl-[protein] + acetyl-CoA = N(6)-biotinyl-L-lysyl-[protein] + malonyl-CoA. It functions in the pathway lipid metabolism; malonyl-CoA biosynthesis; malonyl-CoA from acetyl-CoA: step 1/1. Functionally, component of the acetyl coenzyme A carboxylase (ACC) complex. Biotin carboxylase (BC) catalyzes the carboxylation of biotin on its carrier protein (BCCP) and then the CO(2) group is transferred by the transcarboxylase to acetyl-CoA to form malonyl-CoA. In Endomicrobium trichonymphae, this protein is Acetyl-coenzyme A carboxylase carboxyl transferase subunit beta.